A 1002-amino-acid chain; its full sequence is DNA-directed RNA polymerase 1, mitochondrial (1002 aa).

The transit peptide at 1–21 directs the protein to the mitochondrion; sequence MWRYISKQAYSRKFRNSHDSA. Active-site residues include D703, K778, and D935.

The protein belongs to the phage and mitochondrial RNA polymerase family. As to expression, the highest levels of expression are detected in the mature leaves. The level of expression is lowest in the cotyledons.

The protein localises to the mitochondrion. The catalysed reaction is RNA(n) + a ribonucleoside 5'-triphosphate = RNA(n+1) + diphosphate. Its function is as follows. DNA-dependent RNA polymerase catalyzes the transcription of DNA into RNA using the four ribonucleoside triphosphates as substrates. The chain is DNA-directed RNA polymerase 1, mitochondrial (RPOT1) from Nicotiana sylvestris (Wood tobacco).